A 331-amino-acid chain; its full sequence is Cathepsin S (331 aa).

An N-terminal signal peptide occupies residues 1–16; that stretch reads MKRLVCVLLVCSSAVA. The propeptide at 17–114 is activation peptide; that stretch reads QLHKDPTLDH…ITYKSNPNRI (98 aa). The N-linked (GlcNAc...) asparagine glycan is linked to N104. Intrachain disulfides connect C126/C224, C136/C180, C170/C213, and C272/C320. The active site involves C139. Active-site residues include H278 and N298.

Belongs to the peptidase C1 family. As to quaternary structure, monomer.

The protein localises to the lysosome. It localises to the secreted. The protein resides in the cytoplasmic vesicle. It is found in the phagosome. It carries out the reaction Similar to cathepsin L, but with much less activity on Z-Phe-Arg-|-NHMec, and more activity on the Z-Val-Val-Arg-|-Xaa compound.. Functionally, thiol protease. Key protease responsible for the removal of the invariant chain from MHC class II molecules and MHC class II antigen presentation. The bond-specificity of this proteinase is in part similar to the specificities of cathepsin L. The protein is Cathepsin S (CTSS) of Homo sapiens (Human).